The chain runs to 477 residues: E3 ubiquitin-protein ligase TRIM17 (477 aa).

An RING-type zinc finger spans residues 16–66; that stretch reads CSICLDYFTDPVMTACGHNFCRECIQMSWEKGKGKKGKKKQKGSFPCPECR. The B box-type zinc finger occupies 94–135; the sequence is HKRDLCQIHQEPLKLFCQDDQTPICVVCREAQEHRMHRVLPL. The Zn(2+) site is built by cysteine 99, histidine 102, cysteine 121, and histidine 127. A coiled-coil region spans residues 135-225; sequence LDEAAREYKL…GKLQDSKASL (91 aa). The region spanning 276-475 is the B30.2/SPRY domain; that stretch reads AIKTVCRVPG…MVISTVTMWV (200 aa).

The protein belongs to the TRIM/RBCC family. As to quaternary structure, interacts (via coiled coil) with TRIM44 (via coiled coil). Interacts with TRIM28; this interaction prevents TRIM28 activity on BCL2A1. Interacts with TRIM41; this interaction prevents TRIM41 activity on ZSCAN2. Interacts with BECN1. Interacts with NFATC3 and NFATC4; these interactions prevent NFATC3 and NFATC4 nuclear localization. In terms of processing, auto-ubiquitinated. In terms of tissue distribution, expressed almost exclusively in the testis.

It localises to the cytoplasm. The protein resides in the lysosome. The catalysed reaction is S-ubiquitinyl-[E2 ubiquitin-conjugating enzyme]-L-cysteine + [acceptor protein]-L-lysine = [E2 ubiquitin-conjugating enzyme]-L-cysteine + N(6)-ubiquitinyl-[acceptor protein]-L-lysine.. It functions in the pathway protein modification; protein ubiquitination. E3 ubiquitin ligase that plays important roles in the regulation of neuronal apoptosis, selective autophagy or cell proliferation. Stimulates the degradation of kinetochore ZW10 interacting protein ZWINT in a proteasome-dependent manner, leading to negative regulation of cell proliferation. Inhibits autophagic degradation of diverse known targets while contributing to autophagy of midbodies. Autophagy-inhibitory activity involves MCL1, which TRIM17 assembles into complexes with the key autophagy regulator BECN1. Controls neuronal apoptosis by mediating ubiquitination and degradation of MCL1 to initiate neuronal death. In addition, regulates NFAT transcription factors NFATC3 and NFATC4 activities by preventing their nuclear localization, thus inhibiting their transcriptional activities. Decreases TRIM41-mediated degradation of ZSCAN2 thereby stimulating alpha-synuclein/SNCA transcription in neuronal cells. Prevents the E3 ubiquitin-ligase activity of TRIM28 and its interaction with anti-apoptotic BCL2A1, blocking TRIM28 from ubiquitinating BCL2A1. In Rattus norvegicus (Rat), this protein is E3 ubiquitin-protein ligase TRIM17 (Trim17).